A 628-amino-acid chain; its full sequence is MPHPDGDLDRRIELLTAQIIAARKAYYQENTSLMSDVEYDALEHELKDAEHAKGFSDRNSPSLTVGIAAQLNLFEPVKHIEPMLSLDNVFSLDQLHSWYEKTKKICPEGDQCTFVCELKIDGVGVSLRYANGYLISAATRGDGAIGEDITQNMLYVPSIPPRIALPGIFEIRGEAFIKRDEFDRINQLSLERSKQFANPRNFVSGCIRTKTPNMRYLESISFYAHGFTQVYGYTSGGMNLHSDITASGGVKTEIEHGMFSAYSRLSECKIPVNSYNRLCTNFSEIESYIENIRLNRQCVPYAIDGIVVKIDSLQKQALLGSTTKAPRWAVAYKFPSESTVTRLLDIEVSVGRTGRVTPYAVLQPIQLDGSEVSRATLHNQKVIGDKDLLIGDYVRIRKAGDIVPEVLCALPEKRDGSEVLFKMPSLCPSCGAELMPSKLGDIDLRCPNMQSCLVQLAGRLEYIGSRGVLDIAYLAEENAYALSHLRKFGKSAEVQLFKITIDDLVALEFMYKGNMRSPFRKKGDSFPGFEEPTKSAQDMVDSIERAKRSPLWKFLLALNIRHIGPASAKALADHFGSIESIINAKIDELLKVRSLGETIAISVHDWFRDPWRVELVNTWRSDGALFGH.

NAD(+) contacts are provided by residues 36 to 40 (DVEYD), 85 to 86 (SL), and glutamate 117. Lysine 119 functions as the N6-AMP-lysine intermediate in the catalytic mechanism. NAD(+)-binding residues include arginine 140, glutamate 174, lysine 309, and lysine 333. Zn(2+) is bound by residues cysteine 427, cysteine 430, cysteine 446, and cysteine 452.

Belongs to the NAD-dependent DNA ligase family. LigA subfamily. Requires Mg(2+) as cofactor. It depends on Mn(2+) as a cofactor.

It carries out the reaction NAD(+) + (deoxyribonucleotide)n-3'-hydroxyl + 5'-phospho-(deoxyribonucleotide)m = (deoxyribonucleotide)n+m + AMP + beta-nicotinamide D-nucleotide.. In terms of biological role, DNA ligase that catalyzes the formation of phosphodiester linkages between 5'-phosphoryl and 3'-hydroxyl groups in double-stranded DNA using NAD as a coenzyme and as the energy source for the reaction. It is essential for DNA replication and repair of damaged DNA. The polypeptide is DNA ligase (Tropheryma whipplei (strain Twist) (Whipple's bacillus)).